Consider the following 197-residue polypeptide: Probable chorismate pyruvate-lyase (197 aa).

Substrate is bound by residues arginine 77, leucine 115, and glutamate 176.

This sequence belongs to the UbiC family.

The protein resides in the cytoplasm. The catalysed reaction is chorismate = 4-hydroxybenzoate + pyruvate. The protein operates within cofactor biosynthesis; ubiquinone biosynthesis. Its function is as follows. Removes the pyruvyl group from chorismate, with concomitant aromatization of the ring, to provide 4-hydroxybenzoate (4HB) for the ubiquinone pathway. The polypeptide is Probable chorismate pyruvate-lyase (Burkholderia ambifaria (strain ATCC BAA-244 / DSM 16087 / CCUG 44356 / LMG 19182 / AMMD) (Burkholderia cepacia (strain AMMD))).